Here is a 140-residue protein sequence, read N- to C-terminus: Endoribonuclease YbeY (140 aa).

3 residues coordinate Zn(2+): histidine 100, histidine 104, and histidine 110.

It belongs to the endoribonuclease YbeY family. Zn(2+) serves as cofactor.

It localises to the cytoplasm. Its function is as follows. Single strand-specific metallo-endoribonuclease involved in late-stage 70S ribosome quality control and in maturation of the 3' terminus of the 16S rRNA. In Helicobacter pylori (strain P12), this protein is Endoribonuclease YbeY.